A 202-amino-acid polypeptide reads, in one-letter code: Small ribosomal subunit protein uS4c (202 aa).

An S4 RNA-binding domain is found at 90–153 (MRLDNVTFRL…KSETIISKNI (64 aa)).

Belongs to the universal ribosomal protein uS4 family. Part of the 30S ribosomal subunit. Contacts protein S5. The interaction surface between S4 and S5 is involved in control of translational fidelity.

It is found in the plastid. Its subcellular location is the chloroplast. In terms of biological role, one of the primary rRNA binding proteins, it binds directly to 16S rRNA where it nucleates assembly of the body of the 30S subunit. Functionally, with S5 and S12 plays an important role in translational accuracy. In Hypnum cupressiforme (Cypress-leaved plait-moss), this protein is Small ribosomal subunit protein uS4c (rps4).